Consider the following 1313-residue polypeptide: Target of rapamycin complex 1 subunit mip1 (1313 aa).

The interval 1–35 is disordered; it reads MNDRISEVSGSSRARRSVLSYGTTETGSDRYTENS. A phosphoserine mark is found at Ser834, Ser837, and Ser882. WD repeat units lie at residues 986 to 1029, 1033 to 1074, 1087 to 1126, 1130 to 1170, 1176 to 1216, 1219 to 1259, and 1268 to 1308; these read TFNN…NSFK, SATT…KVEL, GDRN…CYAN, RSSN…RDSL, EHSS…SLQT, TDNS…NTFR, and PKPS…IHTD.

It belongs to the WD repeat RAPTOR family. The target of rapamycin complex 1 (TORC1) is composed of at least mip1, pop3/wat1, tco89, toc1 and tor2.

It localises to the cytoplasm. In terms of biological role, component of TORC1, which regulates multiple cellular processes to control cell growth in response to environmental signals. Tor2 is essential for growth. Nutrient limitation and environmental stress signals cause inactivation of TORC1. Active TORC1 positively controls cell growth and ribosome biogenesis by regulating ribosomal protein gene expression. TORC1 negatively controls G1 cell-cycle arrest, sexual development and amino acid uptake. Represses mating, meiosis and sporulation efficiency by interfering with the functions of the transcription factor ste11 and the meiosis-promoting RNA-binding protein mei2. This is Target of rapamycin complex 1 subunit mip1 from Schizosaccharomyces pombe (strain 972 / ATCC 24843) (Fission yeast).